Reading from the N-terminus, the 178-residue chain is Probable DNA-directed RNA polymerase subunit delta (178 aa).

Residues 14-81 enclose the HTH HARE-type domain; it reads KSFIDMAYTL…GENLWGLRDW (68 aa). Positions 114–178 are disordered; it reads LGDDDADEDD…AFEDAEDFND (65 aa). Over residues 116–178 the composition is skewed to acidic residues; the sequence is DDDADEDDDI…AFEDAEDFND (63 aa).

The protein belongs to the RpoE family. In terms of assembly, RNAP is composed of a core of 2 alpha, a beta and a beta' subunits. The core is associated with a delta subunit and one of several sigma factors.

Functionally, participates in both the initiation and recycling phases of transcription. In the presence of the delta subunit, RNAP displays an increased specificity of transcription, a decreased affinity for nucleic acids, and an increased efficiency of RNA synthesis because of enhanced recycling. This is Probable DNA-directed RNA polymerase subunit delta from Staphylococcus epidermidis (strain ATCC 35984 / DSM 28319 / BCRC 17069 / CCUG 31568 / BM 3577 / RP62A).